A 282-amino-acid polypeptide reads, in one-letter code: Pantothenate synthetase (282 aa).

30–37 serves as a coordination point for ATP; sequence MGGLHQGH. The Proton donor role is filled by histidine 37. Glutamine 61 serves as a coordination point for (R)-pantoate. A beta-alanine-binding site is contributed by glutamine 61. An ATP-binding site is contributed by 146-149; that stretch reads GQKD. Glutamine 152 lines the (R)-pantoate pocket. ATP is bound by residues isoleucine 175 and 183–186; that span reads MSTR.

Belongs to the pantothenate synthetase family. Homodimer.

Its subcellular location is the cytoplasm. It carries out the reaction (R)-pantoate + beta-alanine + ATP = (R)-pantothenate + AMP + diphosphate + H(+). The protein operates within cofactor biosynthesis; (R)-pantothenate biosynthesis; (R)-pantothenate from (R)-pantoate and beta-alanine: step 1/1. Its function is as follows. Catalyzes the condensation of pantoate with beta-alanine in an ATP-dependent reaction via a pantoyl-adenylate intermediate. The sequence is that of Pantothenate synthetase from Vesicomyosocius okutanii subsp. Calyptogena okutanii (strain HA).